A 168-amino-acid chain; its full sequence is uncharacterized protein (168 aa).

Residues 1–52 are disordered; sequence MVLGLASFPESLSSQSETATQPRRPSVKWDLGSDYRKGTEETTASGSNFRRE. The span at 10–23 shows a compositional bias: polar residues; the sequence is ESLSSQSETATQPR. The span at 31–40 shows a compositional bias: basic and acidic residues; that stretch reads LGSDYRKGTE.

This is an uncharacterized protein from Mus musculus (Mouse).